The primary structure comprises 283 residues: Cilia- and flagella-associated protein 77 (283 aa).

The segment at aspartate 151–glycine 170 is disordered.

It belongs to the CFAP77 family. As to quaternary structure, microtubule inner protein component of sperm flagellar doublet microtubules.

The protein localises to the cytoplasm. It localises to the cytoskeleton. The protein resides in the cilium axoneme. It is found in the flagellum axoneme. Functionally, microtubule inner protein (MIP) part of the dynein-decorated doublet microtubules (DMTs) in cilia axoneme, which is required for motile cilia beating. This chain is Cilia- and flagella-associated protein 77, found in Mus musculus (Mouse).